A 238-amino-acid chain; its full sequence is tRNA (guanine-N(7)-)-methyltransferase (238 aa).

S-adenosyl-L-methionine contacts are provided by E68, E93, D120, and D143. D143 is a catalytic residue. Residues K147, D179, and 216-219 (TKFE) each bind substrate.

This sequence belongs to the class I-like SAM-binding methyltransferase superfamily. TrmB family.

The catalysed reaction is guanosine(46) in tRNA + S-adenosyl-L-methionine = N(7)-methylguanosine(46) in tRNA + S-adenosyl-L-homocysteine. Its pathway is tRNA modification; N(7)-methylguanine-tRNA biosynthesis. Catalyzes the formation of N(7)-methylguanine at position 46 (m7G46) in tRNA. The chain is tRNA (guanine-N(7)-)-methyltransferase from Shewanella amazonensis (strain ATCC BAA-1098 / SB2B).